The sequence spans 257 residues: UPF0246 protein BF3795 (257 aa).

This sequence belongs to the UPF0246 family.

The polypeptide is UPF0246 protein BF3795 (Bacteroides fragilis (strain ATCC 25285 / DSM 2151 / CCUG 4856 / JCM 11019 / LMG 10263 / NCTC 9343 / Onslow / VPI 2553 / EN-2)).